Consider the following 435-residue polypeptide: DEAD-box ATP-dependent RNA helicase CshB (435 aa).

Residues 5–33 (SRFDQFGFQPFIGLAIDKLGFYEPTEVQQ) carry the Q motif motif. In terms of domain architecture, Helicase ATP-binding spans 36-208 (IPGILKGESI…SKYMENPRYE (173 aa)). 49 to 56 (SQTGTGKT) serves as a coordination point for ATP. Positions 156–159 (DEAD) match the DEAD box motif. Residues 235-378 (LLKNVLVGSQ…HVDWKNKEFV (144 aa)) form the Helicase C-terminal domain. The segment at 383-435 (RNRRAKREAKRETADPREIGMRKKAKQKGKPNYKKKINYKMNEIKRRERRKKR) is disordered. Positions 391-403 (AKRETADPREIGM) are enriched in basic and acidic residues. Positions 404–420 (RKKAKQKGKPNYKKKIN) are enriched in basic residues.

This sequence belongs to the DEAD box helicase family. CshB subfamily.

It is found in the cytoplasm. It catalyses the reaction ATP + H2O = ADP + phosphate + H(+). DEAD-box RNA helicase involved in cold tolerance, motility, and tolerance to heat, alkali and oxidative stress. The sequence is that of DEAD-box ATP-dependent RNA helicase CshB from Listeria monocytogenes serovar 1/2a (strain ATCC BAA-679 / EGD-e).